A 463-amino-acid polypeptide reads, in one-letter code: L-seryl-tRNA(Sec) selenium transferase (463 aa).

Lys-295 is subject to N6-(pyridoxal phosphate)lysine.

It belongs to the SelA family. Homodecamer; pentamer of dimers. Binds only one seryl-tRNA(Sec) per dimer. The cofactor is pyridoxal 5'-phosphate.

It localises to the cytoplasm. The catalysed reaction is L-seryl-tRNA(Sec) + selenophosphate + H(+) = L-selenocysteinyl-tRNA(Sec) + phosphate. Its pathway is aminoacyl-tRNA biosynthesis; selenocysteinyl-tRNA(Sec) biosynthesis; selenocysteinyl-tRNA(Sec) from L-seryl-tRNA(Sec) (bacterial route): step 1/1. In terms of biological role, converts seryl-tRNA(Sec) to selenocysteinyl-tRNA(Sec) required for selenoprotein biosynthesis. The sequence is that of L-seryl-tRNA(Sec) selenium transferase from Salmonella schwarzengrund (strain CVM19633).